The chain runs to 453 residues: Cholesterol 7-desaturase nvd (453 aa).

The chain crosses the membrane as a helical span at residues 53–73 (IVEYILILTLMFAFSAILYVI). One can recognise a Rieske domain in the interval 126 to 229 (WFAVAETREL…VVETDGAIWI (104 aa)). Positions 167, 169, 187, and 190 each coordinate [2Fe-2S] cluster.

The protein belongs to the cholesterol 7-desaturase family. It depends on [2Fe-2S] cluster as a cofactor.

It is found in the membrane. The enzyme catalyses cholesterol + NADPH + O2 + H(+) = 7-dehydrocholesterol + NADP(+) + 2 H2O. It carries out the reaction cholesterol + NADH + O2 + H(+) = 7-dehydrocholesterol + NAD(+) + 2 H2O. It functions in the pathway steroid hormone biosynthesis; dafachronic acid biosynthesis. Its function is as follows. Catalyzes the production of 7-dehydrocholesterol (7-DHC or cholesta-5,7-dien-3beta-ol) by inserting a double bond (desaturating) at the C7-C8 single bond of cholesterol. Essential regulator of steroid biosynthesis as this reaction is the first step in the synthesis of the steroid hormone Delta(7)-dafachronic acid. This is Cholesterol 7-desaturase nvd from Bombyx mori (Silk moth).